The chain runs to 528 residues: Phosphoenolpyruvate carboxykinase (ATP) (528 aa).

Residues Arg-56, Tyr-192, and Lys-198 each contribute to the substrate site. ATP-binding positions include Lys-198, His-217, and 233-241 (GLSGTGKTT). Positions 198 and 217 each coordinate Mn(2+). Residue Asp-254 coordinates Mn(2+). Residues Glu-282, Arg-319, and Thr-444 each coordinate ATP. A substrate-binding site is contributed by Arg-319.

It belongs to the phosphoenolpyruvate carboxykinase (ATP) family. The cofactor is Mn(2+).

Its subcellular location is the cytoplasm. The enzyme catalyses oxaloacetate + ATP = phosphoenolpyruvate + ADP + CO2. Its pathway is carbohydrate biosynthesis; gluconeogenesis. Involved in the gluconeogenesis. Catalyzes the conversion of oxaloacetate (OAA) to phosphoenolpyruvate (PEP) through direct phosphoryl transfer between the nucleoside triphosphate and OAA. This Bacillus pumilus (strain SAFR-032) protein is Phosphoenolpyruvate carboxykinase (ATP).